The chain runs to 140 residues: Organic hydroperoxide resistance protein-like (140 aa).

This sequence belongs to the OsmC/Ohr family.

This chain is Organic hydroperoxide resistance protein-like, found in Staphylococcus aureus (strain MRSA252).